A 102-amino-acid polypeptide reads, in one-letter code: C-X-C motif chemokine 10 (102 aa).

Positions 1 to 19 are cleaved as a signal peptide; it reads MNKSGFLIFCLILLTLSQG. R24 is subject to Citrulline. 2 cysteine pairs are disulfide-bonded: C28–C55 and C30–C72.

Belongs to the intercrine alpha (chemokine CxC) family. In terms of assembly, monomer, dimer, and tetramer. Interacts with CXCR3 (via N-terminus).

The protein localises to the secreted. Functionally, pro-inflammatory cytokine that is involved in a wide variety of processes such as chemotaxis, differentiation, and activation of peripheral immune cells, regulation of cell growth, apoptosis and modulation of angiostatic effects. Plays thereby an important role during viral infections by stimulating the activation and migration of immune cells to the infected sites. Mechanistically, binding of CXCL10 to the CXCR3 receptor activates G protein-mediated signaling and results in downstream activation of phospholipase C-dependent pathway, an increase in intracellular calcium production and actin reorganization. In turn, recruitment of activated Th1 lymphocytes occurs at sites of inflammation. Activation of the CXCL10/CXCR3 axis also plays an important role in neurons in response to brain injury for activating microglia, the resident macrophage population of the central nervous system, and directing them to the lesion site. This recruitment is an essential element for neuronal reorganization. This chain is C-X-C motif chemokine 10 (CXCL10), found in Bos taurus (Bovine).